The sequence spans 386 residues: Patatin (386 aa).

The signal sequence occupies residues 1–23 (MATTKSFLILFFMILATTSSTCA). Residues 32–229 (LSIDGGGIKG…TVGDPALLSL (198 aa)) form the PNPLA domain. The short motif at 36–41 (GGGIKG) is the GXGXXG element. The short motif at 75–79 (GTSTG) is the GXSXG element. The active-site Nucleophile is the Ser77. N-linked (GlcNAc...) asparagine glycosylation occurs at Asn115. Asp215 acts as the Proton acceptor in catalysis. Residues 215–217 (DGA) carry the DGA/G motif.

The protein belongs to the patatin family.

It localises to the vacuole. Functionally, probable lipolytic acyl hydrolase (LAH), an activity which is thought to be involved in the response of tubers to pathogens. The chain is Patatin from Solanum tuberosum (Potato).